Consider the following 806-residue polypeptide: Facilitated trehalose transporter Tret1 (806 aa).

Disordered regions lie at residues 1–34 (MFGNEMDDTRDPLQYGYQRVNTGEGSLSTSTTGT) and 48–138 (LNST…HKNQ). At 1–339 (MFGNEMDDTR…LEVYRPTTNP (339 aa)) the chain is on the cytoplasmic side. Positions 25–34 (GSLSTSTTGT) are enriched in low complexity. A helical transmembrane segment spans residues 340-360 (IFIWTQVLAALSVSLGSMVVG). The Extracellular portion of the chain corresponds to 361–389 (FSSAYTSPALVSMKDRNITSFEVTDQSGS). The N-linked (GlcNAc...) asparagine glycan is linked to Asn377. The chain crosses the membrane as a helical span at residues 390–410 (WVGGIMPLAGLAGGILGGPLI). At 411–424 (EYLGRKNTILATAT) the chain is on the cytoplasmic side. Residues 425-445 (PFIISWLLIACATHVAMVLVG) form a helical membrane-spanning segment. At 446–447 (RA) the chain is on the extracellular side. A helical membrane pass occupies residues 448-468 (LSGFSVGVASLSLPVYLGETV). At 469–473 (QPEVR) the chain is on the cytoplasmic side. Residues 474 to 494 (GTLGLLPTAFGNIGILLCFVA) traverse the membrane as a helical segment. At 495 to 501 (GKYMDWS) the chain is on the extracellular side. Residues 502-522 (GLAFLGAALPIPFLLLMFLIP) traverse the membrane as a helical segment. At 523-585 (ETPRWYVSRG…DLMKKANLKP (63 aa)) the chain is on the cytoplasmic side. The helical transmembrane segment at 586 to 606 (LLISLGLMFFQQLSGINAVIF) threads the bilayer. The Extracellular segment spans residues 607-622 (YTVQIFQDAGSTIDEN). Residues 623-643 (LCTIIVGVVNFIATFIATMLI) traverse the membrane as a helical segment. At 644 to 649 (DRLGRK) the chain is on the cytoplasmic side. A helical membrane pass occupies residues 650-670 (MLLYISDVAMIITLMTLGGFF). Residues 671–681 (YVKNSGQDVSQ) lie on the Extracellular side of the membrane. A helical transmembrane segment spans residues 682 to 702 (VGWLPLAAFVIYVLGFSLGFG). Topologically, residues 703-723 (PIPWLMMGEILPGKIRGSAAS) are cytoplasmic. A helical transmembrane segment spans residues 724–744 (VATAFNWSCTFIVTKTFADII). The Extracellular portion of the chain corresponds to 745–750 (NAIGTH). The helical transmembrane segment at 751-771 (GTFWMFGSICVIGLAFVIFYV) threads the bilayer. Residues 772–806 (PETQGKSLEDIERKMMGRVRRMSSVANIKPLSFNM) lie on the Cytoplasmic side of the membrane.

It belongs to the major facilitator superfamily. Sugar transporter (TC 2.A.1.1) family. Trehalose transporter subfamily.

It localises to the cell membrane. In terms of biological role, high-capacity facilitative transporter for trehalose. Does not transport maltose, sucrose or lactose. Mediates the bidirectional transfer of trehalose. Responsible for the transport of trehalose synthesized in the fat body and the incorporation of trehalose into other tissues that require a carbon source, thereby regulating trehalose levels in the hemolymph. The polypeptide is Facilitated trehalose transporter Tret1 (Aedes aegypti (Yellowfever mosquito)).